Consider the following 152-residue polypeptide: Transcriptional repressor NrdR (152 aa).

Residues 1 to 21 (MRCPFCGNGDTQVKDSRPTED) are disordered. Residues 3–34 (CPFCGNGDTQVKDSRPTEDSAAIRRRRFCPAC) fold into a zinc finger. A compositionally biased stretch (basic and acidic residues) spans 12 to 21 (QVKDSRPTED). The ATP-cone domain maps to 49-139 (LVIVKKDGQR…VYRNFREAKD (91 aa)).

The protein belongs to the NrdR family. Zn(2+) is required as a cofactor.

Functionally, negatively regulates transcription of bacterial ribonucleotide reductase nrd genes and operons by binding to NrdR-boxes. This Rhodospirillum rubrum (strain ATCC 11170 / ATH 1.1.1 / DSM 467 / LMG 4362 / NCIMB 8255 / S1) protein is Transcriptional repressor NrdR.